Here is a 322-residue protein sequence, read N- to C-terminus: Packaging protein 3 (322 aa).

The disordered stretch occupies residues 1 to 24; it reads MHPILKNIRSQPDQGRAEEHNPEL. Residues 1–127 form an interaction with packaging protein 1 region; the sequence is MHPILKNIRS…RDVERWQHDT (127 aa).

This sequence belongs to the adenoviridae packaging protein 3 family. Part of the genome packaging complex composed of packaging proteins 1, 2 and 3; this complex specifically binds to the packaging sequence on the left end of viral genomic DNA and performs packaging of the viral genome. Interacts with hexon-linking protein IIIa; this interaction is required to promote correct genome packaging. In terms of processing, cleaved at different sites by the viral protease during virion maturation.

Its subcellular location is the host nucleus. Its function is as follows. Involved in viral genome packaging through its interaction with packaging proteins 1 and 2. After proteolytic cleavage by adenovirus protease, L1 52/55k protein is removed from the capsid during viral maturation. The polypeptide is Packaging protein 3 (Pantherophis guttatus (Corn snake)).